The following is a 541-amino-acid chain: EH domain-containing protein 4 (541 aa).

Methionine 1 bears the N-acetylmethionine mark. The interval 1–20 (MFSWMGRQAGGRERSGGMDA) is disordered. Phosphoserine is present on serine 15. Residues 58–289 (FENKPMILLV…DLFRDIQSLP (232 aa)) form the Dynamin-type G domain. A G1 motif region spans residues 68 to 75 (GQYSTGKT). Residue 68-75 (GQYSTGKT) participates in ATP binding. The segment at 94–95 (EP) is G2 motif. The G3 motif stretch occupies residues 156–159 (DSPG). Serine 162 is modified (phosphoserine). Residues 222 to 225 (NKAD) form a G4 motif region. Lysine 223 provides a ligand contact to ATP. Residue valine 246 is a region of interest, G5 motif. Tryptophan 261 contacts ATP. Positions 447 to 535 (DKPVYDELFY…PHLVPPSHRK (89 aa)) constitute an EH domain. Phosphotyrosine is present on tyrosine 451. Position 459 is a phosphoserine (serine 459). The EF-hand domain occupies 479–514 (LPNSVLGKIWKLADCDCDGMLDEEEFALAKHLIKIK). The Ca(2+) site is built by aspartate 492, aspartate 494, aspartate 496, methionine 498, and glutamate 503.

It belongs to the TRAFAC class dynamin-like GTPase superfamily. Dynamin/Fzo/YdjA family. EHD subfamily. As to quaternary structure, homooligomer, and heterooligomer with EHD1, EHD2 and EHD3. Forms a complex with EHD4 and MICALL1; the complex controls CDH5 trafficking and coordinates angiogenesis.

The protein localises to the early endosome membrane. It is found in the recycling endosome membrane. Its subcellular location is the cell membrane. It localises to the cell junction. The protein resides in the adherens junction. ATP- and membrane-binding protein that probably controls membrane reorganization/tubulation upon ATP hydrolysis. Plays a role in early endosomal transport. During sprouting angiogenesis, in complex with PACSIN2 and MICALL1, forms recycling endosome-like tubular structure at asymmetric adherens junctions to control CDH5 trafficking. This chain is EH domain-containing protein 4, found in Mus musculus (Mouse).